A 100-amino-acid polypeptide reads, in one-letter code: MANDLKLILELSAGAELLFGNIKRRQLSLDGSQKWTIGSLLKWMHANILTRSPELFIQGDTVRPGILVLVNDTDWELLGGLDYELQQNDNILFISTLHGG.

A 1-thioglycine modification is found at Gly100. Residue Gly100 forms a Glycyl lysine isopeptide (Gly-Lys) (interchain with K-? in acceptor proteins) linkage.

The protein belongs to the URM1 family. Interacts with cer. C-terminal thiocarboxylation occurs in 2 steps, it is first acyl-adenylated (-COAMP) via the hesA/moeB/thiF part of the MOCS3 homolog, then thiocarboxylated (-COSH) via the rhodanese domain of the MOCS3 homolog.

The protein localises to the cytoplasm. It participates in tRNA modification; 5-methoxycarbonylmethyl-2-thiouridine-tRNA biosynthesis. Functionally, acts as a sulfur carrier required for 2-thiolation of mcm(5)S(2)U at tRNA wobble positions of cytosolic tRNA(Lys), tRNA(Glu) and tRNA(Gln). Serves as sulfur donor in tRNA 2-thiolation reaction by being thiocarboxylated (-COSH) at its C-terminus by MOCS3. The sulfur is then transferred to tRNA to form 2-thiolation of mcm(5)S(2)U. Also acts as a ubiquitin-like protein (UBL) that is covalently conjugated via an isopeptide bond to lysine residues of target proteins such as Prx2/Jafrac1, Ciao1, Eip71CD and GILT1. The thiocarboxylated form serves as substrate for conjugation and oxidative stress specifically induces the formation of UBL-protein conjugates. This is Ubiquitin-related modifier 1 homolog from Drosophila willistoni (Fruit fly).